An 877-amino-acid polypeptide reads, in one-letter code: Phosphoenolpyruvate carboxylase (877 aa).

Residues H138 and K543 contribute to the active site.

Belongs to the PEPCase type 1 family. Mg(2+) is required as a cofactor.

The enzyme catalyses oxaloacetate + phosphate = phosphoenolpyruvate + hydrogencarbonate. Functionally, forms oxaloacetate, a four-carbon dicarboxylic acid source for the tricarboxylic acid cycle. In Aeromonas hydrophila subsp. hydrophila (strain ATCC 7966 / DSM 30187 / BCRC 13018 / CCUG 14551 / JCM 1027 / KCTC 2358 / NCIMB 9240 / NCTC 8049), this protein is Phosphoenolpyruvate carboxylase.